We begin with the raw amino-acid sequence, 159 residues long: Transmembrane protein 92 (159 aa).

A signal peptide spans Met1–Ala26. The Extracellular segment spans residues Lys27–Arg57. A helical transmembrane segment spans residues Ile58–Cys78. Residues Phe79–Phe159 lie on the Cytoplasmic side of the membrane. Residues Glu122–Phe159 are disordered.

Its subcellular location is the membrane. This is Transmembrane protein 92 (TMEM92) from Homo sapiens (Human).